Reading from the N-terminus, the 990-residue chain is Kinesin-related protein 5 (990 aa).

One can recognise a Kinesin motor domain in the interval 6–330; it reads NIRVMCRFRP…LKFGARAKSI (325 aa). 83–90 contributes to the ATP binding site; it reads GQTGSGKT. Disordered regions lie at residues 401 to 485 and 732 to 788; these read QSNS…SSID and FSSS…QDQQ. The segment covering 406-418 has biased composition (gly residues); it reads SGGGGSGSSGGSS. 2 stretches are compositionally biased toward low complexity: residues 466-485 and 733-781; these read TSSI…SSID and SSSN…PSSN. Residues 513 to 948 are a coiled coil; it reads IEMEKMKEDT…DQLISTQRLI (436 aa).

Belongs to the TRAFAC class myosin-kinesin ATPase superfamily. Kinesin family. Kinesin subfamily. In terms of assembly, interacts with actin.

The protein localises to the cytoplasm. It is found in the cytoskeleton. Functionally, microtubule-associated force-producing protein that plays a role in organelle transport. Its motor activity is directed toward the microtubule's plus end. May connect microtubules to actin filaments. Associates with actin-based structures in cells and is likely involved in the organization of actin cytoskeletons in such structures. This Dictyostelium discoideum (Social amoeba) protein is Kinesin-related protein 5 (kif5).